The sequence spans 403 residues: Enoyl-[acyl-carrier-protein] reductase [NADH] (403 aa).

Residues 49–54 (GASSGY), 75–76 (FE), 112–113 (DA), and 141–142 (LA) each bind NAD(+). Position 227 (tyrosine 227) interacts with substrate. The active-site Proton donor is tyrosine 237. Residues lysine 246 and 276–278 (VVT) contribute to the NAD(+) site.

The protein belongs to the TER reductase family. In terms of assembly, monomer.

The catalysed reaction is a 2,3-saturated acyl-[ACP] + NAD(+) = a (2E)-enoyl-[ACP] + NADH + H(+). The protein operates within lipid metabolism; fatty acid biosynthesis. Its function is as follows. Involved in the final reduction of the elongation cycle of fatty acid synthesis (FAS II). Catalyzes the reduction of a carbon-carbon double bond in an enoyl moiety that is covalently linked to an acyl carrier protein (ACP). The protein is Enoyl-[acyl-carrier-protein] reductase [NADH] of Pseudomonas putida (strain ATCC 47054 / DSM 6125 / CFBP 8728 / NCIMB 11950 / KT2440).